Consider the following 388-residue polypeptide: 2-Hydroxyacid oxidase (388 aa).

The segment at 1 to 21 is disordered; that stretch reads MENQFKNNNNSSSIETSNQFS. In terms of domain architecture, FMN hydroxy acid dehydrogenase spans 26-384; sequence NRLDSFVSVS…NNSIIWDQNK (359 aa). Position 52 (Tyr52) interacts with glyoxylate. FMN contacts are provided by residues 105–107, Ser134, 156–158, and Thr184; these read PWA and QLY. Tyr158 provides a ligand contact to glyoxylate. Arg193 provides a ligand contact to glyoxylate. The FMN site is built by Lys255 and Ser277. Positions 279 and 282 each coordinate glyoxylate. The Proton acceptor role is filled by His279. FMN is bound by residues 310 to 314 and 333 to 334; these read DGGIR and GR.

Belongs to the FMN-dependent alpha-hydroxy acid dehydrogenase family. Homotetramer. It depends on FMN as a cofactor.

It carries out the reaction glycolate + O2 = glyoxylate + H2O2. It catalyses the reaction a (2S)-2-hydroxycarboxylate + O2 = a 2-oxocarboxylate + H2O2. Its function is as follows. Catalyzes the oxidation of glycolate to glyoxylate, with a reduction of O2 to H2O2. May use other 2-hydroxyacids as substrates. This Dictyostelium discoideum (Social amoeba) protein is 2-Hydroxyacid oxidase (haox).